The following is a 480-amino-acid chain: Probable serine/threonine-protein phosphatase 2A regulatory subunit B'' subunit TON2 (480 aa).

EF-hand domains follow at residues V186–N221, T294–E329, and D369–K404. Residues D307, D309, S311, S313, and E318 each contribute to the Ca(2+) site.

As to quaternary structure, interacts with PP2AA1. Widely expressed.

The protein localises to the cytoplasm. Its subcellular location is the cytoskeleton. Its function is as follows. Probable regulatory subunit of type 2A protein phosphatase involved in the control of the dynamic organization of the cortical cytoskeleton. Plays an important role in the organization of interphase microtubule arrays in part through the regulation of nucleation geometry. Required for the reorganization of cortical arrays in response to light. This chain is Probable serine/threonine-protein phosphatase 2A regulatory subunit B'' subunit TON2 (TON2), found in Arabidopsis thaliana (Mouse-ear cress).